The following is a 384-amino-acid chain: Interstitial collagenase (384 aa).

An N-terminal signal peptide occupies residues 1–25; sequence MLSGLWSSILALLGVFLQSVGEFRA. Positions 26-88 are cleaved as a propeptide — activation peptide; that stretch reads ETQEQDVEIV…STCGVPDVGE (63 aa). Positions 79 to 86 match the Cysteine switch motif; the sequence is STCGVPDV. C81 lines the Zn(2+) pocket. Ca(2+) is bound by residues D113 and D129. Zn(2+) is bound by residues H139 and D141. 4 residues coordinate Ca(2+): D146, G147, G149, and N151. H154 lines the Zn(2+) pocket. Residues G161, G163, and D165 each coordinate Ca(2+). H167 is a binding site for Zn(2+). Residues D169, E170, and E172 each contribute to the Ca(2+) site. H189 is a binding site for Zn(2+). The active site involves E190. Zn(2+)-binding residues include H193 and H199. Residues 218 to 239 are disordered; the sequence is LSQDDIDGPSGNPVQPRGPQTP. C242 and C381 form a disulfide bridge. Residues D249, Q277, and D347 each contribute to the Ca(2+) site. Hemopexin repeat units lie at residues 273–319 and 333–381; these read ELGL…FGFP and KQSM…WFNC.

This sequence belongs to the peptidase M10A family. Requires Ca(2+) as cofactor. Zn(2+) is required as a cofactor.

The protein resides in the secreted. It is found in the extracellular space. The protein localises to the extracellular matrix. The catalysed reaction is Cleavage of the triple helix of collagen at about three-quarters of the length of the molecule from the N-terminus, at 775-Gly-|-Ile-776 in the alpha1(I) chain. Cleaves synthetic substrates and alpha-macroglobulins at bonds where P1' is a hydrophobic residue.. With respect to regulation, can be activated without removal of the activation peptide. Cleaves collagens of types I, II, and III at one site in the helical domain. Also cleaves collagens of types VII and X. The chain is Interstitial collagenase from Aquarana catesbeiana (American bullfrog).